The primary structure comprises 1128 residues: Translation initiation factor IF-2 (1128 aa).

A disordered region spans residues 57–519; it reads NSDKQILSIN…KETTRQRQKR (463 aa). The segment covering 70-83 has biased composition (basic and acidic residues); that stretch reads NKKDNYKQNKEDKS. Residues 100–110 show a composition bias toward low complexity; it reads KKQLLNKPLNK. A compositionally biased stretch (polar residues) spans 120–146; it reads QLKNPNKPNIYNSSQSQANLTNQNTKS. Basic and acidic residues predominate over residues 147–158; it reads KPSEHFNKDKKT. Over residues 182 to 196 the composition is skewed to low complexity; the sequence is KNINNNLKSNESSKN. The segment covering 201–214 has biased composition (basic and acidic residues); that stretch reads GDKRELSLKPDQNR. 2 stretches are compositionally biased toward polar residues: residues 243–267 and 386–397; these read KQNN…NRPG and AKTNNQKQNIES. Positions 432-445 are enriched in basic and acidic residues; it reads RKDWDDSAKLEALR. Residues 499 to 519 are compositionally biased toward basic residues; it reads HKSTKQFKKKKKETTRQRQKR. The 173-residue stretch at 620 to 792 folds into the tr-type G domain; sequence KRPPVITVMG…ILLVSEVEDL (173 aa). Residues 629-636 form a G1 region; that stretch reads GHVDHGKT. GTP is bound at residue 629 to 636; it reads GHVDHGKT. Residues 654-658 are G2; sequence GITQH. The interval 679 to 682 is G3; that stretch reads DTPG. GTP is bound by residues 679 to 683 and 733 to 736; these read DTPGH and NKID. The G4 stretch occupies residues 733 to 736; sequence NKID. Residues 769–771 form a G5 region; the sequence is SAI.

Belongs to the TRAFAC class translation factor GTPase superfamily. Classic translation factor GTPase family. IF-2 subfamily.

It is found in the cytoplasm. Its function is as follows. One of the essential components for the initiation of protein synthesis. Protects formylmethionyl-tRNA from spontaneous hydrolysis and promotes its binding to the 30S ribosomal subunits. Also involved in the hydrolysis of GTP during the formation of the 70S ribosomal complex. In Prochlorococcus marinus (strain MIT 9312), this protein is Translation initiation factor IF-2.